A 135-amino-acid polypeptide reads, in one-letter code: MDTKNFYRLDDGSGKYELWIWKGFDEQFEKVTKGDTKSRKKILTWIERLSHGIPTQPEKAKVLKGNACKGLSGPVMELKPKPYRVSFICLCNKYILVGTIWRKRANSRDSSEIDKACKLMKELVEMFLKEAGTCC.

This is an uncharacterized protein from Aquifex aeolicus (strain VF5).